Reading from the N-terminus, the 347-residue chain is NADH-ubiquinone oxidoreductase chain 2 (347 aa).

The next 11 membrane-spanning stretches (helical) occupy residues 3–23, 25–45, 59–79, 96–116, 122–142, 153–173, 178–198, 200–220, 237–257, 274–294, and 325–345; these read PPIL…VLTS, HWML…PILM, YFLM…INLL, TLMT…FWVP, ISLS…LSVL, LLLL…LNQT, ILAY…IYNP, MMLL…MLFM, MPLI…LPPL, EMII…YFYM, and FLPP…IISI.

The protein belongs to the complex I subunit 2 family. In terms of assembly, core subunit of respiratory chain NADH dehydrogenase (Complex I) which is composed of 45 different subunits. Interacts with TMEM242.

Its subcellular location is the mitochondrion inner membrane. The enzyme catalyses a ubiquinone + NADH + 5 H(+)(in) = a ubiquinol + NAD(+) + 4 H(+)(out). Core subunit of the mitochondrial membrane respiratory chain NADH dehydrogenase (Complex I) which catalyzes electron transfer from NADH through the respiratory chain, using ubiquinone as an electron acceptor. Essential for the catalytic activity and assembly of complex I. This chain is NADH-ubiquinone oxidoreductase chain 2, found in Paradoxurus hermaphroditus (Asian palm civet).